The sequence spans 262 residues: Type III pantothenate kinase (262 aa).

9-16 (DIGNTNVK) provides a ligand contact to ATP. Substrate contacts are provided by residues Y103 and 110–113 (GADR). D112 serves as the catalytic Proton acceptor. D134 serves as a coordination point for K(+). ATP is bound at residue T137. Substrate is bound at residue T190.

Belongs to the type III pantothenate kinase family. Homodimer. It depends on NH4(+) as a cofactor. K(+) serves as cofactor.

Its subcellular location is the cytoplasm. It carries out the reaction (R)-pantothenate + ATP = (R)-4'-phosphopantothenate + ADP + H(+). Its pathway is cofactor biosynthesis; coenzyme A biosynthesis; CoA from (R)-pantothenate: step 1/5. Functionally, catalyzes the phosphorylation of pantothenate (Pan), the first step in CoA biosynthesis. The sequence is that of Type III pantothenate kinase from Nitratidesulfovibrio vulgaris (strain ATCC 29579 / DSM 644 / CCUG 34227 / NCIMB 8303 / VKM B-1760 / Hildenborough) (Desulfovibrio vulgaris).